A 242-amino-acid chain; its full sequence is 1-(5-phosphoribosyl)-5-[(5-phosphoribosylamino)methylideneamino] imidazole-4-carboxamide isomerase (242 aa).

Asp8 serves as the catalytic Proton acceptor. The Proton donor role is filled by Asp129.

This sequence belongs to the HisA/HisF family.

The protein resides in the cytoplasm. It carries out the reaction 1-(5-phospho-beta-D-ribosyl)-5-[(5-phospho-beta-D-ribosylamino)methylideneamino]imidazole-4-carboxamide = 5-[(5-phospho-1-deoxy-D-ribulos-1-ylimino)methylamino]-1-(5-phospho-beta-D-ribosyl)imidazole-4-carboxamide. It participates in amino-acid biosynthesis; L-histidine biosynthesis; L-histidine from 5-phospho-alpha-D-ribose 1-diphosphate: step 4/9. This chain is 1-(5-phosphoribosyl)-5-[(5-phosphoribosylamino)methylideneamino] imidazole-4-carboxamide isomerase, found in Clostridium botulinum (strain Okra / Type B1).